We begin with the raw amino-acid sequence, 464 residues long: Secretion-regulating guanine nucleotide exchange factor (464 aa).

RCC1 repeat units lie at residues 15–67 (AVLF…VTDG), 68–119 (GDLF…LTEK), 120–171 (GQVL…TTAT), 172–230 (GSVF…LTDT), 231–283 (GELY…KTET), 284–351 (GKVF…VIRD), and 352–402 (KCCS…LAVC). Residues 422-464 (DDTENTESQGAVDRDRLEGETISDLNPDRTRNGGGGCESETVQ) form a disordered region. Ser429 is modified (phosphoserine).

Interacts with SEC5. The interaction occurs only in the presence of magnesium or manganese and is stimulated by dCTP or GTP.

The protein resides in the cytoplasm. It is found in the nucleus. In terms of biological role, probable guanine nucleotide exchange factor (GEF), which may be involved in the secretion process. The sequence is that of Secretion-regulating guanine nucleotide exchange factor (Sergef) from Mus musculus (Mouse).